The primary structure comprises 247 residues: Probable transcriptional regulatory protein Syncc9605_2132 (247 aa).

The protein belongs to the TACO1 family.

Its subcellular location is the cytoplasm. The polypeptide is Probable transcriptional regulatory protein Syncc9605_2132 (Synechococcus sp. (strain CC9605)).